The primary structure comprises 111 residues: MRLITLFLLLLLLAIQYPLWLGKGGWLRVWDMQKQVTAQNQRNAELKQRNTKLEGEVKDLKEGTGAIEERARYELGMVKDDEGFVQFVAPAPKTSETPLPPPPPAGQQAHH.

The Cytoplasmic portion of the chain corresponds to 1-3 (MRL). The helical transmembrane segment at 4–21 (ITLFLLLLLLAIQYPLWL) threads the bilayer. The Periplasmic portion of the chain corresponds to 22-111 (GKGGWLRVWD…PPPAGQQAHH (90 aa)). The stretch at 31-64 (DMQKQVTAQNQRNAELKQRNTKLEGEVKDLKEGT) forms a coiled coil. The segment at 89–111 (APAPKTSETPLPPPPPAGQQAHH) is disordered.

The protein belongs to the FtsB family. As to quaternary structure, part of a complex composed of FtsB, FtsL and FtsQ.

The protein localises to the cell inner membrane. Its function is as follows. Essential cell division protein. May link together the upstream cell division proteins, which are predominantly cytoplasmic, with the downstream cell division proteins, which are predominantly periplasmic. The chain is Cell division protein FtsB from Ralstonia pickettii (strain 12J).